A 40-amino-acid chain; its full sequence is MSAGSGRIPLWVVATIAGLGVITVVGIFFYGAYAGIGSSI.

The chain crosses the membrane as a helical span at residues 8 to 28 (IPLWVVATIAGLGVITVVGIF).

This sequence belongs to the PsbJ family. As to quaternary structure, PSII is composed of 1 copy each of membrane proteins PsbA, PsbB, PsbC, PsbD, PsbE, PsbF, PsbH, PsbI, PsbJ, PsbK, PsbL, PsbM, PsbT, PsbX, PsbY, PsbZ, Psb30/Ycf12, peripheral proteins PsbO, CyanoQ (PsbQ), PsbU, PsbV and a large number of cofactors. It forms dimeric complexes.

It localises to the cellular thylakoid membrane. Its function is as follows. One of the components of the core complex of photosystem II (PSII). PSII is a light-driven water:plastoquinone oxidoreductase that uses light energy to abstract electrons from H(2)O, generating O(2) and a proton gradient subsequently used for ATP formation. It consists of a core antenna complex that captures photons, and an electron transfer chain that converts photonic excitation into a charge separation. This is Photosystem II reaction center protein J from Nostoc sp. (strain PCC 7120 / SAG 25.82 / UTEX 2576).